Consider the following 289-residue polypeptide: Serine/threonine-protein phosphatase Pgam5, mitochondrial (289 aa).

It belongs to the phosphoglycerate mutase family. BPG-dependent PGAM subfamily. Interacts with Pk92B/ASK1.

It localises to the mitochondrion outer membrane. It carries out the reaction O-phospho-L-seryl-[protein] + H2O = L-seryl-[protein] + phosphate. It catalyses the reaction O-phospho-L-threonyl-[protein] + H2O = L-threonyl-[protein] + phosphate. Displays phosphatase activity for serine/threonine residues, and dephosphorylates and activates Pk92B kinase. Has apparently no phosphoglycerate mutase activity. The protein is Serine/threonine-protein phosphatase Pgam5, mitochondrial of Drosophila yakuba (Fruit fly).